Here is a 707-residue protein sequence, read N- to C-terminus: UvrABC system protein C (707 aa).

One can recognise a GIY-YIG domain in the interval 14-94 (AEPGCYLMKD…IKKHRPRFNV (81 aa)). The 36-residue stretch at 206 to 241 (GELVERLRGRMAGAAEGLRFEEAARLRDQLQAVERS) folds into the UVR domain. The segment at 654–684 (PDAPPAAADEPSGAPEGTPAGGPAEAIPDAA) is disordered. Residues 658 to 684 (PAAADEPSGAPEGTPAGGPAEAIPDAA) are compositionally biased toward low complexity.

This sequence belongs to the UvrC family. In terms of assembly, interacts with UvrB in an incision complex.

The protein localises to the cytoplasm. Functionally, the UvrABC repair system catalyzes the recognition and processing of DNA lesions. UvrC both incises the 5' and 3' sides of the lesion. The N-terminal half is responsible for the 3' incision and the C-terminal half is responsible for the 5' incision. The polypeptide is UvrABC system protein C (Anaeromyxobacter dehalogenans (strain 2CP-C)).